A 573-amino-acid polypeptide reads, in one-letter code: Glutamate--tRNA ligase (573 aa).

Residues 106–116 (PNPDGAFHLGN) carry the 'HIGH' region motif.

It belongs to the class-I aminoacyl-tRNA synthetase family. Glutamate--tRNA ligase type 2 subfamily.

It is found in the cytoplasm. The enzyme catalyses tRNA(Glu) + L-glutamate + ATP = L-glutamyl-tRNA(Glu) + AMP + diphosphate. Functionally, catalyzes the attachment of glutamate to tRNA(Glu) in a two-step reaction: glutamate is first activated by ATP to form Glu-AMP and then transferred to the acceptor end of tRNA(Glu). This is Glutamate--tRNA ligase from Thermococcus onnurineus (strain NA1).